Here is a 420-residue protein sequence, read N- to C-terminus: Tyrosine--tRNA ligase (420 aa).

Tyr-33 is a binding site for L-tyrosine. The short motif at 38–47 (PTADSLHVGH) is the 'HIGH' region element. Tyr-167 and Gln-171 together coordinate L-tyrosine. The short motif at 227-231 (KFGKT) is the 'KMSKS' region element. Lys-230 provides a ligand contact to ATP. The S4 RNA-binding domain maps to 353 to 419 (LTVADLLVKV…GKRNYALVKV (67 aa)).

This sequence belongs to the class-I aminoacyl-tRNA synthetase family. TyrS type 1 subfamily. In terms of assembly, homodimer.

The protein localises to the cytoplasm. The enzyme catalyses tRNA(Tyr) + L-tyrosine + ATP = L-tyrosyl-tRNA(Tyr) + AMP + diphosphate + H(+). Catalyzes the attachment of tyrosine to tRNA(Tyr) in a two-step reaction: tyrosine is first activated by ATP to form Tyr-AMP and then transferred to the acceptor end of tRNA(Tyr). This is Tyrosine--tRNA ligase from Anaeromyxobacter dehalogenans (strain 2CP-1 / ATCC BAA-258).